The sequence spans 285 residues: Bifunctional protein FolD (285 aa).

NADP(+) is bound by residues 165-167 (GRS) and S190.

The protein belongs to the tetrahydrofolate dehydrogenase/cyclohydrolase family. In terms of assembly, homodimer.

It catalyses the reaction (6R)-5,10-methylene-5,6,7,8-tetrahydrofolate + NADP(+) = (6R)-5,10-methenyltetrahydrofolate + NADPH. It carries out the reaction (6R)-5,10-methenyltetrahydrofolate + H2O = (6R)-10-formyltetrahydrofolate + H(+). It participates in one-carbon metabolism; tetrahydrofolate interconversion. In terms of biological role, catalyzes the oxidation of 5,10-methylenetetrahydrofolate to 5,10-methenyltetrahydrofolate and then the hydrolysis of 5,10-methenyltetrahydrofolate to 10-formyltetrahydrofolate. The chain is Bifunctional protein FolD from Streptococcus pneumoniae (strain ATCC BAA-255 / R6).